Reading from the N-terminus, the 1024-residue chain is Beta-galactosidase (1024 aa).

Residues N103 and D202 each coordinate substrate. Position 202 (D202) interacts with Na(+). 3 residues coordinate Mg(2+): E417, H419, and E462. Substrate contacts are provided by residues E462 and E538 to H541. The active-site Proton donor is E462. E538 serves as the catalytic Nucleophile. N598 provides a ligand contact to Mg(2+). Positions 602 and 605 each coordinate Na(+). 2 residues coordinate substrate: N605 and W1000.

This sequence belongs to the glycosyl hydrolase 2 family. As to quaternary structure, homotetramer. It depends on Mg(2+) as a cofactor. Requires Na(+) as cofactor.

The enzyme catalyses Hydrolysis of terminal non-reducing beta-D-galactose residues in beta-D-galactosides.. This Escherichia coli (strain UTI89 / UPEC) protein is Beta-galactosidase.